The following is a 723-amino-acid chain: Nuclear intron maturase 3, mitochondrial (723 aa).

The N-terminal 26 residues, 1-26 (MVLRLRVHSFYNRGISFLVSSSLRNL), are a transit peptide targeting the mitochondrion. The intron maturase type-2; degenerate stretch occupies residues 532–597 (VSAPEELVRK…HYTKDLRVSD (66 aa)). The THAP-type zinc finger occupies 646–700 (CAASFCERSDTIMHRVHLLQNRLHINPLDEEKWVPGMGTIHSALNRKCLPLCSTH).

This sequence belongs to the plant nuclear intron maturase (nMat) family.

The protein localises to the mitochondrion. In terms of biological role, nuclear-encoded maturase required for splicing of group-II introns in mitochondria. Necessary for mitochondrial biogenesis during early developmental stages. The chain is Nuclear intron maturase 3, mitochondrial from Arabidopsis thaliana (Mouse-ear cress).